Reading from the N-terminus, the 62-residue chain is Amolopin-P1 (62 aa).

An N-terminal signal peptide occupies residues 1-22 (MFPMKKSLLLLFFFGPISLSFC). Residues 23-44 (DQERGADEEENGGEVTEQEVKR) constitute a propeptide that is removed on maturation.

In terms of tissue distribution, expressed by the skin glands.

The protein resides in the secreted. Antimicrobial peptide with activity against Gram-positive bacteria. Has been tested against S.aureus (MIC=37.5 ug/mL), against B.pumilus (MIC=75.0 ug/mL), B.cereus (no activity detected). Does not show activity against Gram-negative bacteria (E.coli, B.dysenteriae, A.calcoaceticus, P.aeruginosa) and fungi (C.albicans). Does not show hemolytic activity against rabbit erythrocytes. This is Amolopin-P1 from Amolops loloensis (Lolokou Sucker Frog).